A 785-amino-acid polypeptide reads, in one-letter code: Probable ATP-dependent RNA helicase ddx17 (785 aa).

Composition is skewed to low complexity over residues 1–11 (MSYNSSNSGSG), 18–37 (SGNS…GNRS), 49–95 (SYNR…YGPS), and 105–177 (GSSS…NGYS). Residues 1 to 233 (MSYNSSNSGS…TPSTSYNGGS (233 aa)) are disordered. The span at 178–191 (KPTSNYSYSNGYTG) shows a compositional bias: polar residues. The segment covering 192–233 (PTTNYSSYSNGYSTPPTSTSTSSSSTTTTTTTTPSTSYNGGS) has biased composition (low complexity). A Q motif motif is present at residues 384-412 (MQFTQAPFPGYLMKEIIGAGFPNPTPIQS). A Helicase ATP-binding domain is found at 415–590 (WPIALKGRDI…HDFLTDHIQV (176 aa)). Residue 428-435 (AKTGSGKT) participates in ATP binding. Residues 538 to 541 (DEAD) carry the DEAD box motif. The region spanning 602–763 (NVRQIVEVCQ…KIPIELSNLS (162 aa)) is the Helicase C-terminal domain. Polar residues predominate over residues 764 to 774 (VTPSTSSNTKK). The interval 764-785 (VTPSTSSNTKKFSPYPTYSKRY) is disordered.

Belongs to the DEAD box helicase family. DDX5/DBP2 subfamily.

The protein resides in the cytoplasm. It is found in the nucleus. The enzyme catalyses ATP + H2O = ADP + phosphate + H(+). Its function is as follows. Probable ATP-dependent RNA helicase which may be involved nonsense-mediated mRNA decay and ribosome biogenesis through rRNA processing. The protein is Probable ATP-dependent RNA helicase ddx17 (ddx17) of Dictyostelium discoideum (Social amoeba).